The sequence spans 275 residues: Large ribosomal subunit protein uL2 (275 aa).

2 disordered regions span residues 1-55 and 218-275; these read MGIR…RHRG and PHVR…RRRR. Basic residues predominate over residues 259–275; sequence TRNKKKASSRLIVRRRR.

The protein belongs to the universal ribosomal protein uL2 family. Part of the 50S ribosomal subunit. Forms a bridge to the 30S subunit in the 70S ribosome.

Functionally, one of the primary rRNA binding proteins. Required for association of the 30S and 50S subunits to form the 70S ribosome, for tRNA binding and peptide bond formation. It has been suggested to have peptidyltransferase activity; this is somewhat controversial. Makes several contacts with the 16S rRNA in the 70S ribosome. This chain is Large ribosomal subunit protein uL2, found in Crocosphaera subtropica (strain ATCC 51142 / BH68) (Cyanothece sp. (strain ATCC 51142)).